We begin with the raw amino-acid sequence, 488 residues long: MDALKVQILPDNQSSPSSTHMLTKPKSKKATKSIAMLIVASLAITLGLLFVFSSNSVMFSASFLRRSSLHYSVIIDAGSSGTRIHVFGYWFESGKPVFDFGEEHYASLKLSPGLSSYADNPEGASVSVTKLVEFAKGRIPKGKLKKSDIRLMATAGMRLLDVPVQEQILDVTRRVLRSSGFKFQDEWATVISGTDEGIYAWVVANHALGSLGGDPLKTTGIVELGGASAQVTFVPSEHVPPEFSRTISYGNVSYTIYSHSFLDFGQDAAEDKLLESLQNSVAASTGDGIVEDPCTPKGYIYDTHSQKDSSGFLSEESKFKASLQVQAAGDFTKCRSATLAMLQEGKENCAYKHCSIGSTFTPNIQGSFLATENFFHTSKFFGLGEKEWLSEMILAGKRFCGEEWSKLKEKYPTTKDKYLHRYCFSSAYIISMLHDSLGVALDDERIKYASKAGKENIPLDWALGAFILNTDTPTSDYNGKSRKMIGFK.

Positions Met1–Lys26 are disordered. At Met1–Lys32 the chain is on the cytoplasmic side. A compositionally biased stretch (polar residues) spans Pro10–Met21. A helical; Signal-anchor for type II membrane protein transmembrane segment spans residues Ser33 to Ser53. Residues Ser54–Lys488 lie on the Extracellular side of the membrane. ATP is bound at residue Val73–Arg83. The active-site Proton acceptor is the Glu196. Gly220–Gln230 contributes to the ATP binding site. N-linked (GlcNAc...) asparagine glycosylation is present at Asn251.

Belongs to the GDA1/CD39 NTPase family. Requires Ca(2+) as cofactor. Highly expressed in young rosette leaves but only weakly in roots.

Its subcellular location is the membrane. The catalysed reaction is a ribonucleoside 5'-triphosphate + 2 H2O = a ribonucleoside 5'-phosphate + 2 phosphate + 2 H(+). Its function is as follows. Catalyzes the hydrolysis of phosphoanhydride bonds of nucleoside tri- and di-phosphates. In Arabidopsis thaliana (Mouse-ear cress), this protein is Probable apyrase 5 (APY5).